Here is a 2400-residue protein sequence, read N- to C-terminus: Retinitis pigmentosa 1-like 1 protein (2400 aa).

2 consecutive Doublecortin domains span residues 34–118 and 152–231; these read KKIT…GPGR and RRIL…PAMK. 6 disordered regions span residues 104 to 152, 230 to 310, 444 to 1064, 1188 to 1251, 1275 to 1501, and 1697 to 2400; these read CSDK…KTPR, MKNA…DDMK, GRER…DREA, AMTE…GDLE, EAER…GAAE, and RGEH…DLDF. The segment covering 242–251 has biased composition (polar residues); sequence SGLTSRNKNG. Positions 277–287 are enriched in pro residues; the sequence is RPGPSNPPVGP. Residues 450 to 460 show a composition bias toward polar residues; it reads QDSASPASSTG. 2 stretches are compositionally biased toward low complexity: residues 530-543 and 573-584; these read GASS…GSHE and DPASPALSLSSL. The segment covering 591-601 has biased composition (polar residues); sequence AETQGQGTEQA. Composition is skewed to low complexity over residues 625–637 and 645–654; these read SSTP…SQQG and ASAMSSPSSP. The span at 661 to 670 shows a compositional bias: basic residues; it reads PRGHPRHSHY. Composition is skewed to polar residues over residues 711-740 and 825-835; these read TRTQ…SATV and CCSQPGTQPAQ. Composition is skewed to low complexity over residues 864 to 880, 903 to 921, and 941 to 953; these read QRRS…HQST, PNSG…GSRG, and SGVS…RSSP. Composition is skewed to polar residues over residues 1223-1238 and 1285-1299; these read LVTQ…SNQR and ASSN…TVQE. One copy of the 1-1; approximate repeat lies at 1292-1307; the sequence is LAENTVQEEVQLEETK. The segment at 1292-1342 is 3 X 16 AA approximate tandem repeats of T-E-E-G-L-Q-E-E-G-V-Q-L-E-E-T-K; it reads LAENTVQEEVQLEETKEGTEGEGLQEEAVQLEETKTEEGLQEEGVQLEETK. A 1-2; approximate repeat occupies 1310 to 1326; it reads TEGEGLQEEAVQLEETK. The 1-3 repeat unit spans residues 1327 to 1342; the sequence is TEEGLQEEGVQLEETK. Residues 1346–1363 show a composition bias toward acidic residues; sequence GEGQQEEEAQLEEIEETG. Residues 1434 to 1445 are compositionally biased toward low complexity; sequence RASASAEPCPAE. 2 stretches are compositionally biased toward polar residues: residues 1460–1472 and 1489–1501; these read TDPS…SGSQ and EHTQ…GAAE. Over residues 1726–1736 the composition is skewed to gly residues; that stretch reads AEGGLGPGLSQ. Basic and acidic residues-rich tracts occupy residues 1752-1762 and 1769-1778; these read LNRDKDPKLGE and AQEREGKTHN. Tandem repeats lie at residues 1836 to 1851, 1852 to 1867, and 1875 to 1890. Acidic residues-rich tracts occupy residues 1836 to 1909 and 1920 to 1948; these read EAPE…AEAP and ESVE…EAAQ. A 25 X 16 AA approximate tandem repeats of [ED]-[AT]-[PQ]-[ED]-[AVT]-E-[GKE]-[ED]-[AMT]-Q-[EPK]-[EAT]-[TSELP]-[EG]-[EGSQDI]-[AVIE] region spans residues 1836 to 2244; the sequence is EAPEAEGEAQ…GEAQPESEGE (409 aa). The 2-4; approximate repeat unit spans residues 1891–1906; the sequence is ETPEAEWEVQPESEGA. One copy of the 2-5 repeat lies at 1907–1921; that stretch reads EAPEAEKEAQPETES. The 2-6; approximate repeat unit spans residues 1923–1938; that stretch reads EALETEGEDEPESEGA. A coiled-coil region spans residues 1934–2017; that stretch reads ESEGAEAQEA…EMQEAEEEAQ (84 aa). One copy of the 2-7 repeat lies at 1939 to 1954; the sequence is EAQEAEEAAQEAEGQT. Over residues 1949–1958 the composition is skewed to low complexity; that stretch reads EAEGQTQPES. Residues 1955–1970 form a 2-8; approximate repeat; that stretch reads QPESEVIESQEAEEEA. 4 stretches are compositionally biased toward acidic residues: residues 1959 to 2022, 2048 to 2075, 2083 to 2108, and 2117 to 2245; these read EVIE…ESDG, AQPE…QEAE, EDVD…EAEG, and EAPE…EGET. A 2-9; approximate repeat occupies 1971 to 1984; sequence QPESEDVEALEVEV. 2 tandem repeats follow at residues 1985-2000 and 2001-2016. The stretch at 2017–2031 is one 2-12; approximate repeat; it reads QPESDGVEAQPKSEG. The stretch at 2033–2048 is one 2-13d repeat; that stretch reads EAQEVEGETQKTEGDA. Residues 2054 to 2081 are a coiled coil; the sequence is GVEAPEAEEEAQEAEGEVQEAEGEAHPE. The 2-14 repeat unit spans residues 2056 to 2071; it reads EAPEAEEEAQEAEGEV. The stretch at 2072 to 2085 is one 2-15; approximate repeat; that stretch reads QEAEGEAHPESEDV. 10 consecutive repeat copies span residues 2086–2101, 2102–2116, 2117–2132, 2133–2148, 2149–2164, 2165–2180, 2181–2196, 2197–2212, 2213–2228, and 2229–2244. Residues 2292–2308 show a composition bias toward polar residues; that stretch reads PGSQTGPSSSRASSWGN. A compositionally biased stretch (basic and acidic residues) spans 2312-2327; it reads KDSENDHVLGDTRSPD.

As to quaternary structure, interacts with RP1; has a synergistic effect with RP1 in photoreceptor differentiation. As to expression, retinal-specific; expressed in photoreceptor.

Its subcellular location is the cytoplasm. It is found in the cytoskeleton. It localises to the cilium axoneme. The protein resides in the cell projection. The protein localises to the cilium. Its subcellular location is the photoreceptor outer segment. In terms of biological role, required for the differentiation of photoreceptor cells. Plays a role in the organization of outer segment of rod and cone photoreceptors. This chain is Retinitis pigmentosa 1-like 1 protein (RP1L1), found in Homo sapiens (Human).